The chain runs to 218 residues: Putative glutamine transport system permease protein GlnP (218 aa).

The ABC transmembrane type-1 domain occupies 19–208 (TLVTLKYSVI…ILVILISFIA (190 aa)). 4 consecutive transmembrane segments (helical) span residues 25-45 (YSVI…ICKV), 57-79 (FYTS…FAAP), 86-108 (FNVF…SEVI), and 187-207 (FFPM…ISFI).

It belongs to the binding-protein-dependent transport system permease family. HisMQ subfamily.

The protein resides in the cell inner membrane. In terms of biological role, part of the binding-protein-dependent transport system for glutamine; probably responsible for the translocation of the substrate across the membrane. The polypeptide is Putative glutamine transport system permease protein GlnP (glnP) (Rickettsia prowazekii (strain Madrid E)).